The primary structure comprises 963 residues: Phosphofurin acidic cluster sorting protein 1 (963 aa).

Residues 1 to 22 (MAERGGAGGGPGGAGGGSGQRG) show a composition bias toward gly residues. Disordered stretches follow at residues 1 to 72 (MAER…SSST) and 78 to 97 (VAVASGSAPPGGPGPGRTPA). Ala2 bears the N-acetylalanine mark. Ser28 is subject to Phosphoserine. A Phosphothreonine modification is found at Thr46. Positions 53–72 (ATSSSSSTSAAAASSSSSST) are enriched in low complexity. The interval 168-175 (ETELQLTF) is involved in binding to AP-1. Position 251 is a phosphotyrosine (Tyr251). The segment covering 262–273 (GIKSKLSDRSPD) has biased composition (basic and acidic residues). Disordered regions lie at residues 262-299 (GIKSKLSDRSPDIDNYSEEEEESFSSEQEGSDDPLHGQ) and 377-428 (NPSD…GKDT). Residues 276–293 (NYSEEEEESFSSEQEGSD) show a composition bias toward acidic residues. The stretch at 353-377 (HVSREQIREVEEDLDELYDSLEMYN) forms a coiled coil. Ser379 and Ser381 each carry phosphoserine. Residues 406–428 (MSQSSSQTEIGSLNSKGSLGKDT) show a composition bias toward polar residues. Ser430 and Ser495 each carry phosphoserine. Disordered regions lie at residues 476-542 (PEKV…HSTQ) and 760-804 (SPST…SMSS). A compositionally biased stretch (polar residues) spans 483 to 496 (MKSSKTDLQGSASP). At Thr504 the chain carries Phosphothreonine. Ser519, Ser528, Ser529, Ser531, and Ser534 each carry phosphoserine. Low complexity predominate over residues 770 to 804 (SPVVSLTVPSTSPPSSSGLSRDATATPPSSPSMSS).

It belongs to the PACS family. In terms of assembly, associates with AP-1 and AP-3 but not with AP-2 complexes. Interacts with FURIN. Forms a ternary complex with FURIN and AP-1. Interacts with NPHP1; the interaction is dependent of NPHP1 phosphorylation by CK2. Interacts with PKD2 (via acidic region). Interacts with SORL1. Interacts with WDR37. (Microbial infection) Interacts with HIV-1 Nef. As to quaternary structure, (Microbial infection) Interacts with Epstein-barr virus protein BBLF1.

The protein resides in the golgi apparatus. The protein localises to the trans-Golgi network. Functionally, coat protein that is involved in the localization of trans-Golgi network (TGN) membrane proteins that contain acidic cluster sorting motifs. Controls the endosome-to-Golgi trafficking of furin and mannose-6-phosphate receptor by connecting the acidic-cluster-containing cytoplasmic domain of these molecules with the adapter-protein complex-1 (AP-1) of endosomal clathrin-coated membrane pits. Involved in HIV-1 nef-mediated removal of MHC-I from the cell surface to the TGN. Required for normal ER Ca2+ handling in lymphocytes. Together with WDR37, it plays an essential role in lymphocyte development, quiescence and survival. Required for stabilizing peripheral lymphocyte populations. The sequence is that of Phosphofurin acidic cluster sorting protein 1 (PACS1) from Homo sapiens (Human).